The primary structure comprises 98 residues: DNA-directed RNA polymerase subunit Rpo11 (98 aa).

Belongs to the archaeal Rpo11/eukaryotic RPB11/RPC19 RNA polymerase subunit family. As to quaternary structure, part of the RNA polymerase complex.

It is found in the cytoplasm. It carries out the reaction RNA(n) + a ribonucleoside 5'-triphosphate = RNA(n+1) + diphosphate. Its function is as follows. DNA-dependent RNA polymerase (RNAP) catalyzes the transcription of DNA into RNA using the four ribonucleoside triphosphates as substrates. This is DNA-directed RNA polymerase subunit Rpo11 from Korarchaeum cryptofilum (strain OPF8).